The primary structure comprises 308 residues: Coenzyme PQQ synthesis protein B (308 aa).

It belongs to the PqqB family.

The protein operates within cofactor biosynthesis; pyrroloquinoline quinone biosynthesis. Functionally, may be involved in the transport of PQQ or its precursor to the periplasm. The chain is Coenzyme PQQ synthesis protein B from Klebsiella pneumoniae (strain 342).